The sequence spans 2203 residues: Genome polyprotein (2203 aa).

The N-myristoyl glycine; by host moiety is linked to residue Gly2. Over 2-1513 (GAQVSTQKTG…HVSRAFICLQ (1512 aa)) the chain is Cytoplasmic. The interval 567–583 (ELQNDVRQAVEGAIGRV) is amphipathic alpha-helix. Active-site for protease 2A activity residues include His890 and Asp908. Zn(2+) contacts are provided by Cys925 and Cys927. The active-site For protease 2A activity is Cys979. Cys985 and His987 together coordinate Zn(2+). A membrane-binding region spans residues 1119–1191 (SNGWLKKFTE…EQSAPSQSDQ (73 aa)). The segment at 1119–1257 (SNGWLKKFTE…SPGAGKSVAT (139 aa)) is oligomerization. The tract at residues 1140-1144 (AVKIQ) is RNA-binding. One can recognise an SF3 helicase domain in the interval 1223 to 1379 (EKKMSNYIQF…SMYSQNGKIN (157 aa)). The Zn(2+) site is built by Cys1387, Cys1399, and Cys1404. The C4-type; degenerate zinc-finger motif lies at 1387 to 1404 (CDEECCPVNFKRCCPLVC). The RNA-binding stretch occupies residues 1431-1438 (EYNHRHSV). Residues 1442 to 1447 (LEALFQ) form an oligomerization region. An intramembrane segment occupies 1514-1529 (ALTTFVSVAGIIYIIY). Residues 1530-2203 (KLFAGFQGAY…TLRRKWLDSF (674 aa)) are Cytoplasmic-facing. O-(5'-phospho-RNA)-tyrosine is present on Tyr1539. In terms of domain architecture, Peptidase C3 spans 1559–1737 (GPAFEFAVAM…FSAALLRHYF (179 aa)). Residues His1598, Glu1629, and Cys1705 each act as for protease 3C activity in the active site. The 117-residue stretch at 1968–2084 (GHLIAFDYSG…SYPWPIDASL (117 aa)) folds into the RdRp catalytic domain. Positions 1974 and 2070 each coordinate Mg(2+).

The protein belongs to the picornaviruses polyprotein family. In terms of assembly, interacts with capsid protein VP1 and capsid protein VP3 to form heterotrimeric protomers. As to quaternary structure, interacts with capsid protein VP0, and capsid protein VP3 to form heterotrimeric protomers. Five protomers subsequently associate to form pentamers which serve as building blocks for the capsid. Interacts with capsid protein VP2, capsid protein VP3 and capsid protein VP4 following cleavage of capsid protein VP0. Interacts with capsid protein VP1 and capsid protein VP3 in the mature capsid. In terms of assembly, interacts with capsid protein VP0 and capsid protein VP1 to form heterotrimeric protomers. Five protomers subsequently associate to form pentamers which serve as building blocks for the capsid. Interacts with capsid protein VP4 in the mature capsid. Interacts with protein 2C; this interaction may be important for virion morphogenesis. As to quaternary structure, interacts with capsid protein VP1 and capsid protein VP3. Homodimer. In terms of assembly, homohexamer; forms a hexameric ring structure with 6-fold symmetry characteristic of AAA+ ATPases. Interacts (via N-terminus) with host RTN3 (via reticulon domain); this interaction is important for viral replication. Interacts with capsid protein VP3; this interaction may be important for virion morphogenesis. As to quaternary structure, interacts with protein 3CD. Homodimer. Interacts with host GBF1. Interacts (via GOLD domain) with host ACBD3 (via GOLD domain); this interaction allows the formation of a viral protein 3A/ACBD3 heterotetramer with a 2:2 stoichiometry, which will stimulate the recruitment of host PI4KB in order to synthesize PI4P at the viral RNA replication sites. In terms of assembly, interacts with RNA-directed RNA polymerase. As to quaternary structure, interacts with protein 3AB and with RNA-directed RNA polymerase. Interacts with Viral protein genome-linked and with protein 3CD. Mg(2+) is required as a cofactor. Specific enzymatic cleavages in vivo by the viral proteases yield processing intermediates and the mature proteins. Post-translationally, myristoylation is required for the formation of pentamers during virus assembly. Further assembly of 12 pentamers and a molecule of genomic RNA generates the provirion. In terms of processing, during virion maturation, immature virions are rendered infectious following cleavage of VP0 into VP4 and VP2. This maturation seems to be an autocatalytic event triggered by the presence of RNA in the capsid and it is followed by a conformational change infectious virion. Myristoylation is required during RNA encapsidation and formation of the mature virus particle. Post-translationally, VPg is uridylylated by the polymerase into VPg-pUpU. This acts as a nucleotide-peptide primer for the genomic RNA replication.

Its subcellular location is the virion. It is found in the host cytoplasm. The protein resides in the host cytoplasmic vesicle membrane. The protein localises to the host nucleus. It carries out the reaction a ribonucleoside 5'-triphosphate + H2O = a ribonucleoside 5'-diphosphate + phosphate + H(+). It catalyses the reaction Selective cleavage of Tyr-|-Gly bond in the picornavirus polyprotein.. The catalysed reaction is RNA(n) + a ribonucleoside 5'-triphosphate = RNA(n+1) + diphosphate. The enzyme catalyses Selective cleavage of Gln-|-Gly bond in the poliovirus polyprotein. In other picornavirus reactions Glu may be substituted for Gln, and Ser or Thr for Gly.. Its activity is regulated as follows. Replication or transcription is subject to high level of random mutations by the nucleotide analog ribavirin. In terms of biological role, forms an icosahedral capsid of pseudo T=3 symmetry with capsid proteins VP2 and VP3. The capsid is 300 Angstroms in diameter, composed of 60 copies of each capsid protein and enclosing the viral positive strand RNA genome. Capsid protein VP1 mainly forms the vertices of the capsid. Capsid protein VP1 interacts with host cell receptor to provide virion attachment to target host cells. This attachment induces virion internalization. Tyrosine kinases are probably involved in the entry process. After binding to its receptor, the capsid undergoes conformational changes. Capsid protein VP1 N-terminus (that contains an amphipathic alpha-helix) and capsid protein VP4 are externalized. Together, they shape a pore in the host membrane through which viral genome is translocated to host cell cytoplasm. Forms an icosahedral capsid of pseudo T=3 symmetry with capsid proteins VP2 and VP3. The capsid is 300 Angstroms in diameter, composed of 60 copies of each capsid protein and enclosing the viral positive strand RNA genome. Functionally, lies on the inner surface of the capsid shell. After binding to the host receptor, the capsid undergoes conformational changes. Capsid protein VP4 is released, Capsid protein VP1 N-terminus is externalized, and together, they shape a pore in the host membrane through which the viral genome is translocated into the host cell cytoplasm. Its function is as follows. Component of immature procapsids, which is cleaved into capsid proteins VP4 and VP2 after maturation. Allows the capsid to remain inactive before the maturation step. In terms of biological role, cysteine protease that cleaves viral polyprotein and specific host proteins. It is responsible for the autocatalytic cleavage between the P1 and P2 regions, which is the first cleavage occurring in the polyprotein. Also cleaves the host translation initiation factor EIF4G1, in order to shut down the capped cellular mRNA translation. Inhibits the host nucleus-cytoplasm protein and RNA trafficking by cleaving host members of the nuclear pores. Counteracts stress granule formation probably by antagonizing its assembly or promoting its dissassembly. Plays an essential role in the virus replication cycle by acting as a viroporin. Creates a pore in the host endoplasmic reticulum and as a consequence releases Ca2+ in the cytoplasm of infected cell. In turn, high levels of cytoplasmic calcium may trigger membrane trafficking and transport of viral ER-associated proteins to viroplasms, sites of viral genome replication. Functionally, induces and associates with structural rearrangements of intracellular membranes. Displays RNA-binding, nucleotide binding and NTPase activities. May play a role in virion morphogenesis and viral RNA encapsidation by interacting with the capsid protein VP3. Its function is as follows. Localizes the viral replication complex to the surface of membranous vesicles. Together with protein 3CD binds the Cis-Active RNA Element (CRE) which is involved in RNA synthesis initiation. Acts as a cofactor to stimulate the activity of 3D polymerase, maybe through a nucleid acid chaperone activity. In terms of biological role, localizes the viral replication complex to the surface of membranous vesicles. It inhibits host cell endoplasmic reticulum-to-Golgi apparatus transport and causes the disassembly of the Golgi complex, possibly through GBF1 interaction. This would result in depletion of MHC, trail receptors and IFN receptors at the host cell surface. Plays an essential role in viral RNA replication by recruiting ACBD3 and PI4KB at the viral replication sites, thereby allowing the formation of the rearranged membranous structures where viral replication takes place. Acts as a primer for viral RNA replication and remains covalently bound to viral genomic RNA. VPg is uridylylated prior to priming replication into VPg-pUpU. The oriI viral genomic sequence may act as a template for this. The VPg-pUpU is then used as primer on the genomic RNA poly(A) by the RNA-dependent RNA polymerase to replicate the viral genome. During genome replication, the VPg-RNA linkage is removed by the host TDP2, thereby accelerating replication. During the late stage of the replication cycle, host TDP2 is excluded from sites of viral RNA synthesis and encapsidation, allowing for the generation of progeny virions. Functionally, involved in the viral replication complex and viral polypeptide maturation. It exhibits protease activity with a specificity and catalytic efficiency that is different from protease 3C. Protein 3CD lacks polymerase activity. Protein 3CD binds to the 5'UTR of the viral genome. Its function is as follows. Replicates the viral genomic RNA on the surface of intracellular membranes. May form linear arrays of subunits that propagate along a strong head-to-tail interaction called interface-I. Covalently attaches UMP to a tyrosine of VPg, which is used to prime RNA synthesis. The positive stranded RNA genome is first replicated at virus induced membranous vesicles, creating a dsRNA genomic replication form. This dsRNA is then used as template to synthesize positive stranded RNA genomes. ss(+)RNA genomes are either translated, replicated or encapsidated. In terms of biological role, major viral protease that mediates proteolytic processing of the polyprotein. Cleaves host EIF5B, contributing to host translation shutoff. Also cleaves host PABPC1, contributing to host translation shutoff. Cleaves host NLRP1, triggers host N-glycine-mediated degradation of the autoinhibitory NLRP1 N-terminal fragment. In Echovirus 9 (strain Barty), this protein is Genome polyprotein.